The chain runs to 317 residues: Putative HTH-type transcriptional regulatory protein Mlab_0160 (317 aa).

Residues Leu132–Leu189 form the HTH cro/C1-type domain. A DNA-binding region (H-T-H motif) is located at residues Leu143–Gly162. The disordered stretch occupies residues Val199–Glu219. Basic and acidic residues predominate over residues Pro209–Glu219.

In Methanocorpusculum labreanum (strain ATCC 43576 / DSM 4855 / Z), this protein is Putative HTH-type transcriptional regulatory protein Mlab_0160.